A 99-amino-acid chain; its full sequence is Integration host factor subunit alpha (99 aa).

It belongs to the bacterial histone-like protein family. Heterodimer of an alpha and a beta chain.

Its function is as follows. This protein is one of the two subunits of integration host factor, a specific DNA-binding protein that functions in genetic recombination as well as in transcriptional and translational control. The sequence is that of Integration host factor subunit alpha from Enterobacter sp. (strain 638).